Here is a 319-residue protein sequence, read N- to C-terminus: Glycine--tRNA ligase alpha subunit (319 aa).

The protein belongs to the class-II aminoacyl-tRNA synthetase family. Tetramer of two alpha and two beta subunits.

The protein resides in the cytoplasm. The enzyme catalyses tRNA(Gly) + glycine + ATP = glycyl-tRNA(Gly) + AMP + diphosphate. In Oenococcus oeni (strain ATCC BAA-331 / PSU-1), this protein is Glycine--tRNA ligase alpha subunit.